We begin with the raw amino-acid sequence, 1118 residues long: Pleckstrin homology domain-containing family A member 7 (1118 aa).

2 WW domains span residues 8-41 (DTLP…HPRT) and 53-86 (SDLP…HPVT). Residues 100-113 (EEPHPHMSKPERNQ) are compositionally biased toward basic and acidic residues. The disordered stretch occupies residues 100–145 (EEPHPHMSKPERNQRPSSMVSETSTAGTTSTLEAKPGPKIVKSSSK). Residues 114-131 (RPSSMVSETSTAGTTSTL) are compositionally biased toward polar residues. In terms of domain architecture, PH spans 163 to 281 (PVVVRGWLHK…WVRAMNQAAQ (119 aa)). Basic and acidic residues-rich tracts occupy residues 334–355 (FNRR…EGRR) and 434–443 (HWTKAQKGDG). Disordered stretches follow at residues 334–512 (FNRR…RRAH) and 528–629 (QFRH…RRSM). The span at 452-481 (LPRQGPSQPLSFPENYQSLPKSTRHLSGSS) shows a compositional bias: polar residues. The segment covering 494-512 (YAQDRASHLKMSSEERRAH) has biased composition (basic and acidic residues). Residues Ser533, Ser542, Ser566, Ser601, Ser605, and Ser609 each carry the phosphoserine modification. Residues 535 to 693 (TAPIGAGSPE…AESDIDVKLS (159 aa)) are interaction with CTNND1. The segment covering 564-579 (PPSPSDIPPPGPPRPF) has biased composition (pro residues). Residues 586 to 602 (TPAERVTVKPPEQRRSV) are compositionally biased toward basic and acidic residues. Positions 697–798 (EQDRILQDLE…LQEQHRRAFF (102 aa)) form a coiled coil. 2 disordered regions span residues 839–873 (KTVP…VRTP) and 886–968 (VPYR…EQGQ). Phosphoserine is present on residues Ser857 and Ser864. A Phosphothreonine modification is found at Thr867. Phosphoserine occurs at positions 868, 900, and 904. Pro residues predominate over residues 930–939 (DQPPAVPPLP). Basic and acidic residues predominate over residues 955–966 (RQSDERKRDREQ). 2 positions are modified to phosphoserine: Ser983 and Leu990. Residues 1003-1024 (GSESRYQTLPGRGLSGSTSRLQ) are disordered. Residues 1064–1091 (QRGKMSAEEQLERMKRHQKALVRERKRT) are a coiled coil.

In terms of assembly, interacts with CAMSAP3 and CTNND1. Interacts (via WW domains) with TSPAN33 (via cytoplasmic domain) and with PDZD11; the interaction with TSPAN33 is dependent on PDZD11 being bound to PLEKHA7 and facilitates the docking of ADAM10 to zonula adherens through interaction of TSPAN33 with ADAM10. As to expression, expressed in kidney and lung (at protein level).

The protein resides in the cell junction. Its subcellular location is the adherens junction. It is found in the cytoplasm. The protein localises to the cytoskeleton. It localises to the microtubule organizing center. The protein resides in the centrosome. Functionally, required for zonula adherens biogenesis and maintenance. Acts via its interaction with CAMSAP3, which anchors microtubules at their minus-ends to zonula adherens, leading to the recruitment of KIFC3 kinesin to the junctional site. Mediates docking of ADAM10 to zonula adherens through a PDZD11-dependent interaction with the ADAM10-binding protein TSPAN33. This is Pleckstrin homology domain-containing family A member 7 (Plekha7) from Mus musculus (Mouse).